Here is a 461-residue protein sequence, read N- to C-terminus: Alpha-L-fucosidase (461 aa).

The first 18 residues, 1–18, serve as a signal peptide directing secretion; sequence MKMIIIFFILLILNLIKS.

It belongs to the glycosyl hydrolase 29 family.

The enzyme catalyses an alpha-L-fucoside + H2O = L-fucose + an alcohol. Alpha-L-fucosidase is responsible for hydrolyzing the alpha-1,6-linked fucose joined to the reducing-end N-acetylglucosamine of the carbohydrate moieties of glycoproteins. In Dictyostelium discoideum (Social amoeba), this protein is Alpha-L-fucosidase (alfA).